Reading from the N-terminus, the 332-residue chain is N-acetyl-gamma-glutamyl-phosphate reductase (332 aa).

Residue Cys144 is part of the active site.

The protein belongs to the NAGSA dehydrogenase family. Type 1 subfamily.

It is found in the cytoplasm. It carries out the reaction N-acetyl-L-glutamate 5-semialdehyde + phosphate + NADP(+) = N-acetyl-L-glutamyl 5-phosphate + NADPH + H(+). It functions in the pathway amino-acid biosynthesis; L-arginine biosynthesis; N(2)-acetyl-L-ornithine from L-glutamate: step 3/4. Its function is as follows. Catalyzes the NADPH-dependent reduction of N-acetyl-5-glutamyl phosphate to yield N-acetyl-L-glutamate 5-semialdehyde. In Archaeoglobus fulgidus (strain ATCC 49558 / DSM 4304 / JCM 9628 / NBRC 100126 / VC-16), this protein is N-acetyl-gamma-glutamyl-phosphate reductase.